The chain runs to 93 residues: YcgL domain-containing protein Swoo_2115 (93 aa).

The YcgL domain occupies 1–85 (MICAVYKSRR…PVVNLLEEHK (85 aa)).

The polypeptide is YcgL domain-containing protein Swoo_2115 (Shewanella woodyi (strain ATCC 51908 / MS32)).